The following is a 179-amino-acid chain: Peptidyl-prolyl cis-trans isomerase A (179 aa).

Positions 15-178 (FFDITIGGVE…KPVVIANCGQ (164 aa)) constitute a PPIase cyclophilin-type domain.

The protein belongs to the cyclophilin-type PPIase family.

Its subcellular location is the cytoplasm. The protein resides in the cytosol. It carries out the reaction [protein]-peptidylproline (omega=180) = [protein]-peptidylproline (omega=0). Binds cyclosporin A (CsA). CsA mediates some of its effects via an inhibitory action on PPIase. Its function is as follows. PPIase that catalyzes the cis-trans isomerization of proline imidic peptide bonds in oligopeptides and may therefore assist protein folding. This Dictyostelium discoideum (Social amoeba) protein is Peptidyl-prolyl cis-trans isomerase A (ppiA).